The sequence spans 552 residues: Chaperonin GroEL (552 aa).

Residues 30–33 (TLGP), K51, 87–91 (DGTTT), G415, 479–481 (NAA), and D495 each bind ATP.

Belongs to the chaperonin (HSP60) family. As to quaternary structure, forms a cylinder of 14 subunits composed of two heptameric rings stacked back-to-back. Interacts with the co-chaperonin GroES.

Its subcellular location is the cytoplasm. It catalyses the reaction ATP + H2O + a folded polypeptide = ADP + phosphate + an unfolded polypeptide.. Its function is as follows. Together with its co-chaperonin GroES, plays an essential role in assisting protein folding. The GroEL-GroES system forms a nano-cage that allows encapsulation of the non-native substrate proteins and provides a physical environment optimized to promote and accelerate protein folding. The chain is Chaperonin GroEL from Stutzerimonas stutzeri (Pseudomonas stutzeri).